Consider the following 163-residue polypeptide: E1B protein, small T-antigen (163 aa).

It belongs to the adenoviridae E1B 19 kDa protein family.

It localises to the host cell membrane. The protein resides in the host nucleus envelope. The protein localises to the host nucleus lamina. Its function is as follows. Putative adenovirus Bcl-2 homolog that inhibits apoptosis induced by TNF or FAS pathways, as well as p53-mediated apoptosis. Without E1B 19K function, virus production is compromised because of premature death of host cell. Interacts with Bax protein in cell lysates. This chain is E1B protein, small T-antigen, found in Human adenovirus A serotype 12 (HAdV-12).